We begin with the raw amino-acid sequence, 368 residues long: Cobalt-precorrin-5B C(1)-methyltransferase (368 aa).

The protein belongs to the CbiD family.

It catalyses the reaction Co-precorrin-5B + S-adenosyl-L-methionine = Co-precorrin-6A + S-adenosyl-L-homocysteine. It participates in cofactor biosynthesis; adenosylcobalamin biosynthesis; cob(II)yrinate a,c-diamide from sirohydrochlorin (anaerobic route): step 6/10. Functionally, catalyzes the methylation of C-1 in cobalt-precorrin-5B to form cobalt-precorrin-6A. This is Cobalt-precorrin-5B C(1)-methyltransferase from Brucella canis (strain ATCC 23365 / NCTC 10854 / RM-666).